A 353-amino-acid polypeptide reads, in one-letter code: Probable protein phosphatase 2C 48 (353 aa).

The region spanning 54-348 is the PPM-type phosphatase domain; sequence FAAVCSRRGE…DDCSAICLFF (295 aa). 4 residues coordinate Mn(2+): Asp-90, Gly-91, Asp-293, and Asp-339.

It belongs to the PP2C family. Mg(2+) serves as cofactor. Mn(2+) is required as a cofactor.

It carries out the reaction O-phospho-L-seryl-[protein] + H2O = L-seryl-[protein] + phosphate. The catalysed reaction is O-phospho-L-threonyl-[protein] + H2O = L-threonyl-[protein] + phosphate. This chain is Probable protein phosphatase 2C 48, found in Oryza sativa subsp. japonica (Rice).